Consider the following 98-residue polypeptide: NADH-ubiquinone oxidoreductase chain 4L (98 aa).

Transmembrane regions (helical) follow at residues 1–21 (MPLIYMNIMLAFTISLLGMLV), 29–49 (SLLCLEGMMLSLFIMTTLMTL), and 58–78 (IVPITMLVFAACEAAVGLALL).

This sequence belongs to the complex I subunit 4L family. Core subunit of respiratory chain NADH dehydrogenase (Complex I) which is composed of 45 different subunits.

The protein localises to the mitochondrion inner membrane. The enzyme catalyses a ubiquinone + NADH + 5 H(+)(in) = a ubiquinol + NAD(+) + 4 H(+)(out). Core subunit of the mitochondrial membrane respiratory chain NADH dehydrogenase (Complex I) which catalyzes electron transfer from NADH through the respiratory chain, using ubiquinone as an electron acceptor. Part of the enzyme membrane arm which is embedded in the lipid bilayer and involved in proton translocation. The protein is NADH-ubiquinone oxidoreductase chain 4L (MT-ND4L) of Pan paniscus (Pygmy chimpanzee).